A 339-amino-acid chain; its full sequence is Glyceraldehyde-3-phosphate dehydrogenase (339 aa).

NAD(+)-binding positions include 12-13 (RI), Asp39, Arg84, and Ser127. D-glyceraldehyde 3-phosphate contacts are provided by residues 157–159 (SCT), Thr188, Arg203, 216–217 (TG), and Arg239. Cys158 acts as the Nucleophile in catalysis. An NAD(+)-binding site is contributed by Asn320.

This sequence belongs to the glyceraldehyde-3-phosphate dehydrogenase family. In terms of assembly, homotetramer.

It localises to the cytoplasm. It carries out the reaction D-glyceraldehyde 3-phosphate + phosphate + NAD(+) = (2R)-3-phospho-glyceroyl phosphate + NADH + H(+). It functions in the pathway carbohydrate degradation; glycolysis; pyruvate from D-glyceraldehyde 3-phosphate: step 1/5. Functionally, catalyzes the oxidative phosphorylation of glyceraldehyde 3-phosphate (G3P) to 1,3-bisphosphoglycerate (BPG) using the cofactor NAD. The first reaction step involves the formation of a hemiacetal intermediate between G3P and a cysteine residue, and this hemiacetal intermediate is then oxidized to a thioester, with concomitant reduction of NAD to NADH. The reduced NADH is then exchanged with the second NAD, and the thioester is attacked by a nucleophilic inorganic phosphate to produce BPG. This chain is Glyceraldehyde-3-phosphate dehydrogenase (gapA), found in Mycobacterium avium.